The chain runs to 100 residues: DNA-directed RNA polymerase subunit Rpo11 (100 aa).

Belongs to the archaeal Rpo11/eukaryotic RPB11/RPC19 RNA polymerase subunit family. In terms of assembly, part of the RNA polymerase complex.

Its subcellular location is the cytoplasm. The enzyme catalyses RNA(n) + a ribonucleoside 5'-triphosphate = RNA(n+1) + diphosphate. Functionally, DNA-dependent RNA polymerase (RNAP) catalyzes the transcription of DNA into RNA using the four ribonucleoside triphosphates as substrates. The chain is DNA-directed RNA polymerase subunit Rpo11 from Picrophilus torridus (strain ATCC 700027 / DSM 9790 / JCM 10055 / NBRC 100828 / KAW 2/3).